The chain runs to 126 residues: Small ribosomal subunit protein uS11 (126 aa).

Belongs to the universal ribosomal protein uS11 family. As to quaternary structure, part of the 30S ribosomal subunit. Interacts with proteins S7 and S18. Binds to IF-3.

Its function is as follows. Located on the platform of the 30S subunit, it bridges several disparate RNA helices of the 16S rRNA. Forms part of the Shine-Dalgarno cleft in the 70S ribosome. The chain is Small ribosomal subunit protein uS11 from Treponema pallidum (strain Nichols).